Reading from the N-terminus, the 428-residue chain is Adenylosuccinate synthetase (428 aa).

GTP is bound by residues 12–18 (GDEGKGK) and 40–42 (GHT). Asp13 (proton acceptor) is an active-site residue. Mg(2+)-binding residues include Asp13 and Gly40. Residues 13-16 (DEGK), 38-41 (NAGH), Thr128, Arg142, Gln223, Thr238, and Arg302 each bind IMP. His41 (proton donor) is an active-site residue. 298 to 304 (TTTGRPR) lines the substrate pocket. Residues Arg304, 330-332 (KLD), and 412-414 (SVG) contribute to the GTP site.

Belongs to the adenylosuccinate synthetase family. As to quaternary structure, homodimer. Mg(2+) is required as a cofactor.

Its subcellular location is the cytoplasm. The catalysed reaction is IMP + L-aspartate + GTP = N(6)-(1,2-dicarboxyethyl)-AMP + GDP + phosphate + 2 H(+). It functions in the pathway purine metabolism; AMP biosynthesis via de novo pathway; AMP from IMP: step 1/2. In terms of biological role, plays an important role in the de novo pathway of purine nucleotide biosynthesis. Catalyzes the first committed step in the biosynthesis of AMP from IMP. This Brevibacillus brevis (strain 47 / JCM 6285 / NBRC 100599) protein is Adenylosuccinate synthetase.